Here is a 190-residue protein sequence, read N- to C-terminus: MSKPTREEAKEAVRTLLKFIGEDPNREGLLKTPDRVINSYTEIFSGYGKDAQEILNTKFYDICNFQDLISLEGIKFTSFCEHHILPFNGTVHIAYIPDNCIIGVSKLARIVNIFARRLQIQEKMTLEIAESVQENLKPLGVAVKISALHSCMSMRGVMHDNSVMNTMYYTGIFAEQQKYRYEFLNLIAKR.

Residues Cys-80, His-83, and Cys-151 each contribute to the Zn(2+) site.

The protein belongs to the GTP cyclohydrolase I family. As to quaternary structure, toroid-shaped homodecamer, composed of two pentamers of five dimers.

The catalysed reaction is GTP + H2O = 7,8-dihydroneopterin 3'-triphosphate + formate + H(+). It participates in cofactor biosynthesis; 7,8-dihydroneopterin triphosphate biosynthesis; 7,8-dihydroneopterin triphosphate from GTP: step 1/1. In Rickettsia prowazekii (strain Madrid E), this protein is GTP cyclohydrolase 1 (folE).